A 548-amino-acid chain; its full sequence is Adenine deaminase (548 aa).

Belongs to the metallo-dependent hydrolases superfamily. Adenine deaminase family. Requires Mn(2+) as cofactor.

It catalyses the reaction adenine + H2O + H(+) = hypoxanthine + NH4(+). This chain is Adenine deaminase, found in Borreliella burgdorferi (strain ATCC 35210 / DSM 4680 / CIP 102532 / B31) (Borrelia burgdorferi).